The following is a 639-amino-acid chain: CREB3 regulatory factor (639 aa).

The interval proline 302–serine 422 is disordered. The segment covering serine 310 to serine 328 has biased composition (low complexity). Residues leucine 339–lysine 351 show a composition bias toward polar residues. A compositionally biased stretch (acidic residues) spans glutamate 355 to aspartate 370. Residues glutamate 371 to serine 380 are compositionally biased toward basic and acidic residues. Positions glutamate 381–serine 401 are enriched in acidic residues. In terms of domain architecture, bZIP spans threonine 521–glutamate 584. A basic motif region spans residues arginine 523–lysine 532. The tract at residues leucine 533–leucine 540 is leucine-zipper.

Belongs to the bZIP family. CREBRF subfamily. As to quaternary structure, interacts (via leucine-zipper domain) with CREB3 (via leucine-zipper domain); the interaction promotes CREB3 degradation. Probably degraded by the proteasome.

The protein resides in the nucleus. Its function is as follows. Acts as a negative regulator of the endoplasmic reticulum stress response or unfolded protein response (UPR). Represses the transcriptional activity of CREB3 during the UPR. Recruits CREB3 into nuclear foci. The polypeptide is CREB3 regulatory factor (CREBRF) (Homo sapiens (Human)).